We begin with the raw amino-acid sequence, 887 residues long: Alanine--tRNA ligase (887 aa).

H579, H583, C681, and H685 together coordinate Zn(2+).

The protein belongs to the class-II aminoacyl-tRNA synthetase family. Zn(2+) is required as a cofactor.

It localises to the cytoplasm. It carries out the reaction tRNA(Ala) + L-alanine + ATP = L-alanyl-tRNA(Ala) + AMP + diphosphate. In terms of biological role, catalyzes the attachment of alanine to tRNA(Ala) in a two-step reaction: alanine is first activated by ATP to form Ala-AMP and then transferred to the acceptor end of tRNA(Ala). Also edits incorrectly charged Ser-tRNA(Ala) and Gly-tRNA(Ala) via its editing domain. The chain is Alanine--tRNA ligase from Flavobacterium psychrophilum (strain ATCC 49511 / DSM 21280 / CIP 103535 / JIP02/86).